Reading from the N-terminus, the 557-residue chain is Organic cation/carnitine transporter 2 (557 aa).

At 1–20 (MRDYDEVTAFLGEWGPFQRL) the chain is on the cytoplasmic side. The helical transmembrane segment at 21 to 41 (IFFLLSASIIPNGFNGMSIVF) threads the bilayer. At 42-142 (LAGTPEHRCL…DLVCKDDWKA (101 aa)) the chain is on the extracellular side. N-linked (GlcNAc...) asparagine glycosylation is found at Asn57, Asn64, and Asn91. Residues 143-163 (PLTTSLFFVGVLMGSFISGQL) traverse the membrane as a helical segment. Topologically, residues 164-172 (SDRFGRKNV) are cytoplasmic. The helical transmembrane segment at 173–193 (LFLTMGMQTGFSFLQVFSVNF) threads the bilayer. At 194 to 197 (EMFT) the chain is on the extracellular side. A helical transmembrane segment spans residues 198–218 (VLFVLVGMGQISNYVAAFVLG). Position 218 to 225 (218 to 225 (GTEILSKS)) interacts with ATP. Residues 219 to 232 (TEILSKSIRIIFAT) are Cytoplasmic-facing. The helical transmembrane segment at 233 to 253 (LGVCIFYAFGFMVLPLFAYFI) threads the bilayer. The Extracellular portion of the chain corresponds to 254–257 (RDWR). A helical membrane pass occupies residues 258–278 (MLLLALTVPGVLCGALWWFIP). Over 279–341 (ESPRWLISQG…YDLIRTRNIR (63 aa)) the chain is Cytoplasmic. A helical membrane pass occupies residues 342–362 (VITIMSIILWLTISVGYFGLS). At 363-373 (LDTPNLHGDIY) the chain is on the extracellular side. A helical membrane pass occupies residues 374 to 394 (VNCFLLAAVEVPAYVLAWLLL). Topologically, residues 395 to 406 (QYLPRRYSISAA) are cytoplasmic. The helical transmembrane segment at 407–427 (LFLGGSVLLFMQLVPSELFYL) threads the bilayer. The Extracellular segment spans residues 428–430 (STA). Residues 431–451 (LVMVGKFGITSAYSMVYVYTA) form a helical membrane-spanning segment. The Cytoplasmic portion of the chain corresponds to 452–462 (ELYPTVVRNMG). A helical transmembrane segment spans residues 463 to 483 (VGVSSTASRLGSILSPYFVYL). The Extracellular portion of the chain corresponds to 484–488 (GAYDR). Phosphotyrosine is present on Tyr486. Residues 489–509 (FLPYILMGSLTILTAILTLFF) form a helical membrane-spanning segment. Residues 510-557 (PESFGVPLPDTIDQMLRVKGIKQWQIQSQTRMQKDGEESPTVLKSTAF) are Cytoplasmic-facing. Residue Ser548 is modified to Phosphoserine. At Thr550 the chain carries Phosphothreonine.

This sequence belongs to the major facilitator (TC 2.A.1) superfamily. Organic cation transporter (TC 2.A.1.19) family. As to quaternary structure, interacts with PDZK1. In terms of tissue distribution, widely expressed. Expressed in kidney, liver and testis. Expressed at the brush border of the small, large intestine and colon (at protein level).

It is found in the apical cell membrane. It localises to the basal cell membrane. Its subcellular location is the cell membrane. The enzyme catalyses (R)-carnitine(out) + Na(+)(out) = (R)-carnitine(in) + Na(+)(in). It carries out the reaction glycine betaine(out) + Na(+)(out) = glycine betaine(in) + Na(+)(in). It catalyses the reaction glycine betaine(out) + (R)-carnitine(in) = glycine betaine(in) + (R)-carnitine(out). The catalysed reaction is O-butanoyl-(R)-carnitine(out) + Na(+)(out) = O-butanoyl-(R)-carnitine(in) + Na(+)(in). The enzyme catalyses O-acetyl-(R)-carnitine(out) + Na(+)(out) = O-acetyl-(R)-carnitine(in) + Na(+)(in). It carries out the reaction O-propanoyl-(R)-carnitine(out) + Na(+)(out) = O-propanoyl-(R)-carnitine(in) + Na(+)(in). It catalyses the reaction (S)-carnitine(out) + Na(+)(out) = (S)-carnitine(in) + Na(+)(in). The catalysed reaction is an O-acyl-(R)-carnitine(out) + Na(+)(out) = an O-acyl-(R)-carnitine(in) + Na(+)(in). The enzyme catalyses L-glutamyl-L-arginyl-glycyl-L-methionyl-L-threonine(out) + Na(+)(out) = L-glutamyl-L-arginyl-glycyl-L-methionyl-L-threonine(in) + Na(+)(in). It carries out the reaction N,N-dimethylglycine(out) + Na(+)(out) = N,N-dimethylglycine(in) + Na(+)(in). Its activity is regulated as follows. Inhibited by emetine, quinidine and verapamil. The IC(50) of emetine is 4.2 uM. Not inhibited by valproic acid. Transport of (R)-carnitine is stimulated by cholesterol in the plasma membrane. Sodium-ion dependent, high affinity carnitine transporter. Involved in the active cellular uptake of carnitine. Transports one sodium ion with one molecule of carnitine. Also transports organic cations such as tetraethylammonium (TEA) without the involvement of sodium. Also relative uptake activity ratio of carnitine to TEA is 11.3. May also contribute to regulate the transport of organic compounds in testis across the blood-testis-barrier. The protein is Organic cation/carnitine transporter 2 of Mus musculus (Mouse).